A 512-amino-acid chain; its full sequence is Metal transporter Nramp4 (512 aa).

A run of 12 helical transmembrane segments spans residues 52–72 (LWLFTGPGFLMSIAFLDPGNL), 80–100 (AIAGYSLIWLLMWATAIGLLI), 129–149 (MVLWIMAEIALIGADIQEVIG), 161–181 (LVPLWAGVVITALDCFIFLFL), 189–209 (LEAVFAILIATMALAFAWMFG), 235–255 (AVGIVGCIIMPHNVFLHSALV), 277–297 (IESTGALAVSFIINVFVTTVF), 323–343 (YGGGFFPILYIWAIGVLAAGQ), 371–391 (ALITRSCAIIPTMIVALVFDS), 402–422 (WLNVLQSVQIPFAVIPLLCLV), 440–460 (ISWIVAALVIAINGYLMVDFF), and 468–488 (ILLVPVIIFAIAYVVFVLYLI).

This sequence belongs to the NRAMP (TC 2.A.55) family. In terms of tissue distribution, expressed in vascular tissues.

It is found in the vacuole membrane. Functionally, vacuolar metal transporter involved in intracellular metal homeostasis. Can transport iron (Fe), manganese (Mn) and cadmium (Cd). Regulates metal accumulation under Fe starvation. Acts redundantly with NRAMP3 to mobilize vacuolar Fe and provide sufficient Fe during seed germination. In association with NRAMP3, required for optimal growth and photosynthesis under Mn deficiency. Exports Mn from vacuoles in leaf mesophyll cells, making Mn available for functional photosystem II in chloroplasts. The chain is Metal transporter Nramp4 (NRAMP4) from Arabidopsis thaliana (Mouse-ear cress).